The sequence spans 375 residues: Growth/differentiation factor 8 (375 aa).

A signal peptide spans 1 to 23; that stretch reads MQKLAVYVYIYLFVQISVDPVAL. Positions 24 to 266 are excised as a propeptide; sequence DGSSQPTENT…VTDTPKRSRR (243 aa). Asparagine 71 carries N-linked (GlcNAc...) asparagine glycosylation. Disulfide bonds link cysteine 272/cysteine 282, cysteine 281/cysteine 340, cysteine 309/cysteine 372, and cysteine 313/cysteine 374.

This sequence belongs to the TGF-beta family. Homodimer; disulfide-linked.

The protein resides in the secreted. In terms of biological role, acts specifically as a negative regulator of skeletal muscle growth. The protein is Growth/differentiation factor 8 (MSTN) of Excalfactoria chinensis (Blue-breasted quail).